The sequence spans 156 residues: Small ribosomal subunit protein uS7 (156 aa).

Belongs to the universal ribosomal protein uS7 family. Part of the 30S ribosomal subunit. Contacts proteins S9 and S11.

In terms of biological role, one of the primary rRNA binding proteins, it binds directly to 16S rRNA where it nucleates assembly of the head domain of the 30S subunit. Is located at the subunit interface close to the decoding center, probably blocks exit of the E-site tRNA. This Exiguobacterium sibiricum (strain DSM 17290 / CCUG 55495 / CIP 109462 / JCM 13490 / 255-15) protein is Small ribosomal subunit protein uS7.